Reading from the N-terminus, the 205-residue chain is MKKIISIKGTEKEVIEICERISKMGIDYSFDAKANYSENKAYNSARIKIFGEDKNKLVEDYKNILSIIEHVHNKYNVDVKGLYEYKLSDLKYPVNKDLVLDTLSALKINFKYLKDENVIKCELKVEELNDILKNILEIYSELNVYKLGSKPVKNVLALASYITGNDVNILLEKGLEKELFREENEKIVLNKDIDLTRKELLSVKK.

This is an uncharacterized protein from Methanococcus vannielii (strain ATCC 35089 / DSM 1224 / JCM 13029 / OCM 148 / SB).